Reading from the N-terminus, the 177-residue chain is Large ribosomal subunit protein uL6 (177 aa).

Belongs to the universal ribosomal protein uL6 family. In terms of assembly, part of the 50S ribosomal subunit.

This protein binds to the 23S rRNA, and is important in its secondary structure. It is located near the subunit interface in the base of the L7/L12 stalk, and near the tRNA binding site of the peptidyltransferase center. The sequence is that of Large ribosomal subunit protein uL6 from Brucella melitensis biotype 1 (strain ATCC 23456 / CCUG 17765 / NCTC 10094 / 16M).